The primary structure comprises 308 residues: Ribosomal RNA small subunit methyltransferase H (308 aa).

S-adenosyl-L-methionine-binding positions include 36 to 38 (GGH), D55, F86, D103, and Q110.

It belongs to the methyltransferase superfamily. RsmH family.

It localises to the cytoplasm. It carries out the reaction cytidine(1402) in 16S rRNA + S-adenosyl-L-methionine = N(4)-methylcytidine(1402) in 16S rRNA + S-adenosyl-L-homocysteine + H(+). Its function is as follows. Specifically methylates the N4 position of cytidine in position 1402 (C1402) of 16S rRNA. This is Ribosomal RNA small subunit methyltransferase H from Helicobacter pylori (strain Shi470).